A 514-amino-acid chain; its full sequence is ATP synthase subunit alpha (514 aa).

170-177 (GDRQIGKT) is an ATP binding site.

This sequence belongs to the ATPase alpha/beta chains family. As to quaternary structure, F-type ATPases have 2 components, CF(1) - the catalytic core - and CF(0) - the membrane proton channel. CF(1) has five subunits: alpha(3), beta(3), gamma(1), delta(1), epsilon(1). CF(0) has three main subunits: a(1), b(2) and c(9-12). The alpha and beta chains form an alternating ring which encloses part of the gamma chain. CF(1) is attached to CF(0) by a central stalk formed by the gamma and epsilon chains, while a peripheral stalk is formed by the delta and b chains.

The protein localises to the cell inner membrane. The enzyme catalyses ATP + H2O + 4 H(+)(in) = ADP + phosphate + 5 H(+)(out). Its function is as follows. Produces ATP from ADP in the presence of a proton gradient across the membrane. The alpha chain is a regulatory subunit. This Pseudomonas aeruginosa (strain LESB58) protein is ATP synthase subunit alpha.